A 401-amino-acid chain; its full sequence is Insertion element ISM1 uncharacterized 48.3 kDa protein (401 aa).

This polypeptide is involved in transposition, and should therefore bind to nucleic acids. The chain is Insertion element ISM1 uncharacterized 48.3 kDa protein from Methanobrevibacter smithii.